The following is a 295-amino-acid chain: Pyridoxal 5'-phosphate synthase subunit PdxS (295 aa).

D-ribose 5-phosphate is bound at residue Asp-25. The active-site Schiff-base intermediate with D-ribose 5-phosphate is Lys-82. A D-ribose 5-phosphate-binding site is contributed by Gly-154. Position 166 (Arg-166) interacts with D-glyceraldehyde 3-phosphate. D-ribose 5-phosphate-binding positions include Gly-215 and 236 to 237 (GS).

The protein belongs to the PdxS/SNZ family. In the presence of PdxT, forms a dodecamer of heterodimers.

It carries out the reaction aldehydo-D-ribose 5-phosphate + D-glyceraldehyde 3-phosphate + L-glutamine = pyridoxal 5'-phosphate + L-glutamate + phosphate + 3 H2O + H(+). Its pathway is cofactor biosynthesis; pyridoxal 5'-phosphate biosynthesis. Its function is as follows. Catalyzes the formation of pyridoxal 5'-phosphate from ribose 5-phosphate (RBP), glyceraldehyde 3-phosphate (G3P) and ammonia. The ammonia is provided by the PdxT subunit. Can also use ribulose 5-phosphate and dihydroxyacetone phosphate as substrates, resulting from enzyme-catalyzed isomerization of RBP and G3P, respectively. This chain is Pyridoxal 5'-phosphate synthase subunit PdxS, found in Bacillus cereus (strain 03BB102).